We begin with the raw amino-acid sequence, 136 residues long: Small ribosomal subunit protein uS9 (136 aa).

The disordered stretch occupies residues 97–136 (SPDNRKPLKTEGHLSRDPRAKERRKYGLKKARKAPQFSKR). Residues 98–116 (PDNRKPLKTEGHLSRDPRA) are compositionally biased toward basic and acidic residues. Residues 117–136 (KERRKYGLKKARKAPQFSKR) show a composition bias toward basic residues.

The protein belongs to the universal ribosomal protein uS9 family.

This Prochlorococcus marinus (strain MIT 9312) protein is Small ribosomal subunit protein uS9.